The chain runs to 358 residues: Chorismate synthase (358 aa).

Arginine 46 contributes to the NADP(+) binding site. Residues 123 to 125, 235 to 236, glycine 275, 290 to 294, and arginine 316 contribute to the FMN site; these read RSS, NA, and KATPS.

It belongs to the chorismate synthase family. Homotetramer. The cofactor is FMNH2.

The enzyme catalyses 5-O-(1-carboxyvinyl)-3-phosphoshikimate = chorismate + phosphate. Its pathway is metabolic intermediate biosynthesis; chorismate biosynthesis; chorismate from D-erythrose 4-phosphate and phosphoenolpyruvate: step 7/7. Catalyzes the anti-1,4-elimination of the C-3 phosphate and the C-6 proR hydrogen from 5-enolpyruvylshikimate-3-phosphate (EPSP) to yield chorismate, which is the branch point compound that serves as the starting substrate for the three terminal pathways of aromatic amino acid biosynthesis. This reaction introduces a second double bond into the aromatic ring system. The protein is Chorismate synthase of Aliarcobacter butzleri (strain RM4018) (Arcobacter butzleri).